The chain runs to 157 residues: 2-C-methyl-D-erythritol 2,4-cyclodiphosphate synthase (157 aa).

A divalent metal cation contacts are provided by D8 and H10. Residues D8–H10 and H34–S35 each bind 4-CDP-2-C-methyl-D-erythritol 2-phosphate. H42 contacts a divalent metal cation. 4-CDP-2-C-methyl-D-erythritol 2-phosphate contacts are provided by residues D56 to G58, F61 to D65, A100 to A106, T132 to E135, F139, and R142.

It belongs to the IspF family. Homotrimer. Requires a divalent metal cation as cofactor.

The catalysed reaction is 4-CDP-2-C-methyl-D-erythritol 2-phosphate = 2-C-methyl-D-erythritol 2,4-cyclic diphosphate + CMP. It participates in isoprenoid biosynthesis; isopentenyl diphosphate biosynthesis via DXP pathway; isopentenyl diphosphate from 1-deoxy-D-xylulose 5-phosphate: step 4/6. In terms of biological role, involved in the biosynthesis of isopentenyl diphosphate (IPP) and dimethylallyl diphosphate (DMAPP), two major building blocks of isoprenoid compounds. Catalyzes the conversion of 4-diphosphocytidyl-2-C-methyl-D-erythritol 2-phosphate (CDP-ME2P) to 2-C-methyl-D-erythritol 2,4-cyclodiphosphate (ME-CPP) with a corresponding release of cytidine 5-monophosphate (CMP). The chain is 2-C-methyl-D-erythritol 2,4-cyclodiphosphate synthase from Pseudomonas putida (strain ATCC 700007 / DSM 6899 / JCM 31910 / BCRC 17059 / LMG 24140 / F1).